The following is a 389-amino-acid chain: MIIRSLLDTDLYKFTMMQVVLHHFPGAHVEYRFKCRNPGVDLVPYIEAIRAEIRHLCSLRFTEAELDYLRGLRFIKSDFVDFLDLFHLSEKYIDIRPAASNDGQIDIVISGPWLHTIMFEVPVLAIVNEVYFSRTQAHPQWDEGKRRLTEKLASLTRPGLEDCRIADYGTRRRFSHTWHEHVLMEARSQLGSQYAGTSNVYFAMKHNMTPLGTMAHEYLQACQSLGPRLRDSQVFALETWAREYRGDLGIALSDTYGFDAFLRDFDMFFCKLFDGVRHDSGDPFEWGERMLKHYEGMRVDPQSKALIFSDSLDMPKVVRLYERFRSRCKLAFGVGTNLTNDLGYTPLQIVIKMVRCNGQPVAKLSDAPEKTMCDDPAYLAYLKQVFGVQ.

H216 carries the phosphohistidine; by autocatalysis modification.

This sequence belongs to the NAPRTase family. Transiently phosphorylated on a His residue during the reaction cycle. Phosphorylation strongly increases the affinity for substrates and increases the rate of nicotinate D-ribonucleotide production. Dephosphorylation regenerates the low-affinity form of the enzyme, leading to product release.

The catalysed reaction is nicotinate + 5-phospho-alpha-D-ribose 1-diphosphate + ATP + H2O = nicotinate beta-D-ribonucleotide + ADP + phosphate + diphosphate. The protein operates within cofactor biosynthesis; NAD(+) biosynthesis; nicotinate D-ribonucleotide from nicotinate: step 1/1. In terms of biological role, catalyzes the synthesis of beta-nicotinate D-ribonucleotide from nicotinate and 5-phospho-D-ribose 1-phosphate at the expense of ATP. The sequence is that of Nicotinate phosphoribosyltransferase from Ralstonia nicotianae (strain ATCC BAA-1114 / GMI1000) (Ralstonia solanacearum).